The chain runs to 1048 residues: Transcription factor mef2A (1048 aa).

In terms of domain architecture, MADS-box spans 1–61 (MGRNKITIEK…NKLFQYSSRD (61 aa)). A compositionally biased stretch (polar residues) spans 74-85 (DNTRKNLTNQDY). Disordered regions lie at residues 74–263 (DNTR…QAAQ), 294–339 (QQQH…QQQQ), 386–812 (GIYG…NINT), and 916–1048 (LLLT…EPKN). The segment covering 97-110 (DDEDGDDDGDEDLG) has biased composition (acidic residues). 7 stretches are compositionally biased toward low complexity: residues 130–205 (NNNN…NANH), 212–263 (GNSA…QAAQ), 294–303 (QQQHQQQQQN), 327–339 (QQQQQMQHSQQQQ), 393–437 (PPQM…IMNK), 446–466 (YYDYNGYPQQQQPPQNYNSNG), and 481–500 (QQQSANPYIQQQQQPQHQSP). Residues 249–304 (NNNSNGYQQQQQAAQQAVQQAQMAQQMHLQQQQQYQQLQHIQQQQQQQHQQQQQNM) adopt a coiled-coil conformation. Polar residues predominate over residues 506 to 522 (YSPQQQSPVLNSQNGHH). Positions 529-539 (HQMHHQQHQHQ) are enriched in basic residues. Low complexity predominate over residues 540-593 (QHPQMQQQQQQQQQHQQHPQMQQIQQQQHPQMQQHQQHQQQHPQMQQQHMNNHQ). Residues 600 to 618 (NSSPEINSQKNVHSSPLIM) are compositionally biased toward polar residues. Residues 619 to 699 (NSNNNNNNNN…NSNNGNNNNN (81 aa)) are compositionally biased toward low complexity. Over residues 715–736 (SSPTIPEQPSINVSTSSNSAHV) the composition is skewed to polar residues. 3 stretches are compositionally biased toward low complexity: residues 738 to 802 (NNIT…SSST), 924 to 960 (SNNSNSSNNNNNNNNNNNNTNNNNISGNGSSSSSSSS), and 982 to 1029 (NNNN…NNSN).

The protein resides in the nucleus. In terms of biological role, transcription factor that regulates cell differentiation during development. Seems to negatively regulate prestalk gene expression and positively regulate prespore gene expression. The chain is Transcription factor mef2A (mef2A) from Dictyostelium discoideum (Social amoeba).